Reading from the N-terminus, the 223-residue chain is Urease accessory protein UreF (223 aa).

Belongs to the UreF family. UreD, UreF and UreG form a complex that acts as a GTP-hydrolysis-dependent molecular chaperone, activating the urease apoprotein by helping to assemble the nickel containing metallocenter of UreC. The UreE protein probably delivers the nickel.

The protein resides in the cytoplasm. Functionally, required for maturation of urease via the functional incorporation of the urease nickel metallocenter. The protein is Urease accessory protein UreF of Mesorhizobium japonicum (strain LMG 29417 / CECT 9101 / MAFF 303099) (Mesorhizobium loti (strain MAFF 303099)).